A 351-amino-acid chain; its full sequence is Putative ABC transporter permease protein MJ0876 (351 aa).

The next 9 helical transmembrane spans lie at 4 to 24 (VGILLILFILSLILPFTALYL), 59 to 79 (LPPIIGAVLIGLTISVAGLML), 99 to 119 (VLMVVALVIFIDSLSHLFEIF), 124 to 144 (ILVAGWCGGIFSMILLIIIAL), 152 to 172 (VIIVALLLSYFFMGLRAYLIA), 196 to 216 (GDVIPMTICSIIFIIGVMFLI), 249 to 269 (FITGAIIPYVGLIAFIGIIAP), 284 to 304 (LVPATMFLGVILMVSCHILSL), and 322 to 342 (PLPIGAVLDILGGMLVVYLVY).

Belongs to the binding-protein-dependent transport system permease family. FecCD subfamily.

The protein resides in the cell membrane. Functionally, probably part of a binding-protein-dependent transport system. Probably responsible for the translocation of the substrate across the membrane. The chain is Putative ABC transporter permease protein MJ0876 from Methanocaldococcus jannaschii (strain ATCC 43067 / DSM 2661 / JAL-1 / JCM 10045 / NBRC 100440) (Methanococcus jannaschii).